A 371-amino-acid chain; its full sequence is Ligninase LG5 (371 aa).

Positions 1–21 (MAFKKLLAVLTAALSLRAAQG) are cleaved as a signal peptide. Residues 22–27 (AAVEKR) constitute a propeptide that is removed on maturation. 4 cysteine pairs are disulfide-bonded: C30-C42, C41-C311, C61-C146, and C275-C344. Residue H74 is the Proton acceptor of the active site. The Ca(2+) site is built by D75, G92, D94, and S96. H202 contacts heme b. Ca(2+) contacts are provided by S203, D220, T222, I225, and D227. The N-linked (GlcNAc...) asparagine glycan is linked to N283. The interval 349 to 371 (FPTLSTLPGPATSVARIPPPPGA) is disordered.

Belongs to the peroxidase family. Ligninase subfamily. Requires Ca(2+) as cofactor. It depends on heme b as a cofactor.

The catalysed reaction is 1-(3,4-dimethoxyphenyl)-2-(2-methoxyphenoxy)propane-1,3-diol + H2O2 = 3,4-dimethoxybenzaldehyde + guaiacol + glycolaldehyde + H2O. It catalyses the reaction 2 (3,4-dimethoxyphenyl)methanol + H2O2 = 2 (3,4-dimethoxyphenyl)methanol radical + 2 H2O. The protein operates within secondary metabolite metabolism; lignin degradation. Functionally, depolymerization of lignin. Catalyzes the C(alpha)-C(beta) cleavage of the propyl side chains of lignin. The protein is Ligninase LG5 (GLG5) of Phanerodontia chrysosporium (White-rot fungus).